The following is a 213-amino-acid chain: MAGRHALVWLRADAPSQALTPGAQPRLQAWFAAGFPAVVARRDGAEQPGQVRLGVPLPPAQGKQRIALCAQVSDIARSVPALALPEVISHAPPQWQAALHALQAQATAIGMQPRVFGSFAFQAVTGLPYVHAASDVDLLWTLDTPTQAHAVVTLLQQWEHVTARRADGELLLPDGNAVNWREYAGDAQQVLVKRNDGCRLLPRTALFPERCAA.

Catalysis depends on residues aspartate 135 and aspartate 137.

It belongs to the MdcG family.

The catalysed reaction is apo-[malonate decarboxylase ACP] + 2'-(5''-triphospho-alpha-D-ribosyl)-3'-dephospho-CoA = holo-[malonate decarboxylase ACP] + diphosphate. Its function is as follows. Transfers 2'-(5-triphosphoribosyl)-3'-dephosphocoenzyme-A to the apo-[acyl-carrier-protein] of the malonate decarboxylase to yield holo-[acyl-carrier-protein]. The polypeptide is Phosphoribosyl-dephospho-CoA transferase (Xanthomonas campestris pv. campestris (strain ATCC 33913 / DSM 3586 / NCPPB 528 / LMG 568 / P 25)).